Reading from the N-terminus, the 140-residue chain is Small ribosomal subunit protein uS19 (140 aa).

The protein belongs to the universal ribosomal protein uS19 family.

Its function is as follows. Protein S19 forms a complex with S13 that binds strongly to the 16S ribosomal RNA. The chain is Small ribosomal subunit protein uS19 from Metallosphaera sedula (strain ATCC 51363 / DSM 5348 / JCM 9185 / NBRC 15509 / TH2).